A 421-amino-acid polypeptide reads, in one-letter code: Cytochrome c biogenesis protein Ccs1 (421 aa).

The next 3 helical transmembrane spans lie at 12–32, 71–91, and 157–177; these read LRFAIFILLVIAAFSVIGTVI, TWWFITLILLFGISLLTCTLL, and IAPIIVHFSMIIILIGAIIGS.

It belongs to the Ccs1/CcsB family. May interact with CcsA.

The protein resides in the plastid. Its subcellular location is the chloroplast thylakoid membrane. In terms of biological role, required during biogenesis of c-type cytochromes (cytochrome c6 and cytochrome f) at the step of heme attachment. The protein is Cytochrome c biogenesis protein Ccs1 of Thalassiosira pseudonana (Marine diatom).